The sequence spans 107 residues: Large ribosomal subunit protein bL21c (107 aa).

The protein belongs to the bacterial ribosomal protein bL21 family. In terms of assembly, part of the 50S ribosomal subunit.

The protein localises to the plastid. The protein resides in the chloroplast. Functionally, this protein binds to 23S rRNA. In Cyanidioschyzon merolae (strain NIES-3377 / 10D) (Unicellular red alga), this protein is Large ribosomal subunit protein bL21c.